The chain runs to 320 residues: MMRVVFIGTGDFGVPSLEAIALDGRYTIPAVVTQADKPLGRQKEVIPSPIKRTALKHHIWVFQPENINSAGSIQQIQFLKPDLLVVCDYGQILSKAVLEIPSIGALNIHGSLLPKYRGASPIQAAIMNRDKETGVTVIWMDEGIDTGDILMSDKLLVRSTDTAETLHHRLAELGARLIIQSLEAIRAGKAPRIPQNNALASYAKKIKKEQALIDWTKDRHEIDAMIRAFNPWPVAFTTVWIGGEKKILKIFKVIISHRAKGMPGEVVRIDRHGILVAAGRSGGLLLREVQLEGRKRMHAADFARGARLAIGTVLGQKDEQ.

111 to 114 (SLLP) provides a ligand contact to (6S)-5,6,7,8-tetrahydrofolate.

The protein belongs to the Fmt family.

The enzyme catalyses L-methionyl-tRNA(fMet) + (6R)-10-formyltetrahydrofolate = N-formyl-L-methionyl-tRNA(fMet) + (6S)-5,6,7,8-tetrahydrofolate + H(+). In terms of biological role, attaches a formyl group to the free amino group of methionyl-tRNA(fMet). The formyl group appears to play a dual role in the initiator identity of N-formylmethionyl-tRNA by promoting its recognition by IF2 and preventing the misappropriation of this tRNA by the elongation apparatus. This chain is Methionyl-tRNA formyltransferase, found in Methylacidiphilum infernorum (isolate V4) (Methylokorus infernorum (strain V4)).